The sequence spans 421 residues: 3-phosphoshikimate 1-carboxyvinyltransferase (421 aa).

3-phosphoshikimate-binding residues include lysine 19, serine 20, and arginine 24. Lysine 19 contacts phosphoenolpyruvate. 2 residues coordinate phosphoenolpyruvate: glycine 88 and arginine 116. 3-phosphoshikimate-binding residues include serine 160, glutamine 162, aspartate 307, and lysine 334. Glutamine 162 is a binding site for phosphoenolpyruvate. Aspartate 307 (proton acceptor) is an active-site residue. Positions 338 and 380 each coordinate phosphoenolpyruvate.

This sequence belongs to the EPSP synthase family. In terms of assembly, monomer.

It localises to the cytoplasm. The enzyme catalyses 3-phosphoshikimate + phosphoenolpyruvate = 5-O-(1-carboxyvinyl)-3-phosphoshikimate + phosphate. It functions in the pathway metabolic intermediate biosynthesis; chorismate biosynthesis; chorismate from D-erythrose 4-phosphate and phosphoenolpyruvate: step 6/7. Functionally, catalyzes the transfer of the enolpyruvyl moiety of phosphoenolpyruvate (PEP) to the 5-hydroxyl of shikimate-3-phosphate (S3P) to produce enolpyruvyl shikimate-3-phosphate and inorganic phosphate. In Thermotoga sp. (strain RQ2), this protein is 3-phosphoshikimate 1-carboxyvinyltransferase.